A 179-amino-acid polypeptide reads, in one-letter code: Large ribosomal subunit protein uL5 (179 aa).

The protein belongs to the universal ribosomal protein uL5 family. In terms of assembly, part of the 50S ribosomal subunit; part of the 5S rRNA/L5/L18/L25 subcomplex. Contacts the 5S rRNA and the P site tRNA. Forms a bridge to the 30S subunit in the 70S ribosome.

This is one of the proteins that bind and probably mediate the attachment of the 5S RNA into the large ribosomal subunit, where it forms part of the central protuberance. In the 70S ribosome it contacts protein S13 of the 30S subunit (bridge B1b), connecting the 2 subunits; this bridge is implicated in subunit movement. Contacts the P site tRNA; the 5S rRNA and some of its associated proteins might help stabilize positioning of ribosome-bound tRNAs. This is Large ribosomal subunit protein uL5 from Oceanobacillus iheyensis (strain DSM 14371 / CIP 107618 / JCM 11309 / KCTC 3954 / HTE831).